The primary structure comprises 522 residues: ATP synthase subunit alpha 2 (522 aa).

176–183 (GDRQTGKT) is a binding site for ATP.

It belongs to the ATPase alpha/beta chains family. As to quaternary structure, F-type ATPases have 2 components, CF(1) - the catalytic core - and CF(0) - the membrane proton channel. CF(1) has five subunits: alpha(3), beta(3), gamma(1), delta(1), epsilon(1). CF(0) has three main subunits: a(1), b(2) and c(9-12). The alpha and beta chains form an alternating ring which encloses part of the gamma chain. CF(1) is attached to CF(0) by a central stalk formed by the gamma and epsilon chains, while a peripheral stalk is formed by the delta and b chains.

The protein resides in the cell inner membrane. The catalysed reaction is ATP + H2O + 4 H(+)(in) = ADP + phosphate + 5 H(+)(out). Its function is as follows. Produces ATP from ADP in the presence of a proton gradient across the membrane. The alpha chain is a regulatory subunit. This chain is ATP synthase subunit alpha 2, found in Syntrophotalea carbinolica (strain DSM 2380 / NBRC 103641 / GraBd1) (Pelobacter carbinolicus).